Consider the following 390-residue polypeptide: Curcumin synthase 3 (390 aa).

Residue Cys164 is part of the active site.

This sequence belongs to the thiolase-like superfamily. Chalcone/stilbene synthases family. Homodimer.

The catalysed reaction is (E)-feruloylacetyl-CoA + (E)-feruloyl-CoA + H2O = curcumin + CO2 + 2 CoA. It carries out the reaction (E)-feruloylacetyl-CoA + (E)-4-coumaroyl-CoA + H2O = demethoxycurcumin + CO2 + 2 CoA. It catalyses the reaction (4-coumaroyl)acetyl-CoA + 4-coumaroyl-CoA + H2O = bisdemethoxycurcumin + CO2 + 2 CoA. Its pathway is secondary metabolite biosynthesis; flavonoid biosynthesis. In terms of biological role, catalyzes the synthesis of curcumin by condensing feruloyl-CoA with a diketide-CoA in the curcuminoid biosynthesis. Also acts as a demethoxycurcumin synthase by accepting 4-coumaroyl-CoA as a starter substrate instead of feruloyl-CoA. The sequence is that of Curcumin synthase 3 (CURS3) from Curcuma longa (Turmeric).